We begin with the raw amino-acid sequence, 242 residues long: tRNA (guanine-N(1)-)-methyltransferase (242 aa).

S-adenosyl-L-methionine-binding positions include Gly-111 and 130-135; that span reads IGDYVL.

It belongs to the RNA methyltransferase TrmD family. In terms of assembly, homodimer.

The protein localises to the cytoplasm. The enzyme catalyses guanosine(37) in tRNA + S-adenosyl-L-methionine = N(1)-methylguanosine(37) in tRNA + S-adenosyl-L-homocysteine + H(+). In terms of biological role, specifically methylates guanosine-37 in various tRNAs. In Aster yellows witches'-broom phytoplasma (strain AYWB), this protein is tRNA (guanine-N(1)-)-methyltransferase.